We begin with the raw amino-acid sequence, 453 residues long: Bifunctional protein GlmU (453 aa).

Residues 1–225 (MNIVILAAGT…EWETLGVNSK (225 aa)) form a pyrophosphorylase region. UDP-N-acetyl-alpha-D-glucosamine contacts are provided by residues 6–9 (LAAG), K20, Q71, 76–77 (GT), 98–100 (YGD), G135, E150, N165, and N223. D100 contacts Mg(2+). N223 is a binding site for Mg(2+). The linker stretch occupies residues 226–246 (AQLAELERIHQRNVADALLVD). An N-acetyltransferase region spans residues 247-453 (GVTLADPARV…GYVRPVKKKS (207 aa)). Residues R329 and K347 each contribute to the UDP-N-acetyl-alpha-D-glucosamine site. H359 serves as the catalytic Proton acceptor. The UDP-N-acetyl-alpha-D-glucosamine site is built by Y362 and N373. Acetyl-CoA is bound by residues A376, 382-383 (NY), S401, and A419.

The protein in the N-terminal section; belongs to the N-acetylglucosamine-1-phosphate uridyltransferase family. This sequence in the C-terminal section; belongs to the transferase hexapeptide repeat family. As to quaternary structure, homotrimer. Requires Mg(2+) as cofactor.

The protein resides in the cytoplasm. The enzyme catalyses alpha-D-glucosamine 1-phosphate + acetyl-CoA = N-acetyl-alpha-D-glucosamine 1-phosphate + CoA + H(+). It carries out the reaction N-acetyl-alpha-D-glucosamine 1-phosphate + UTP + H(+) = UDP-N-acetyl-alpha-D-glucosamine + diphosphate. It functions in the pathway nucleotide-sugar biosynthesis; UDP-N-acetyl-alpha-D-glucosamine biosynthesis; N-acetyl-alpha-D-glucosamine 1-phosphate from alpha-D-glucosamine 6-phosphate (route II): step 2/2. Its pathway is nucleotide-sugar biosynthesis; UDP-N-acetyl-alpha-D-glucosamine biosynthesis; UDP-N-acetyl-alpha-D-glucosamine from N-acetyl-alpha-D-glucosamine 1-phosphate: step 1/1. It participates in bacterial outer membrane biogenesis; LPS lipid A biosynthesis. Its function is as follows. Catalyzes the last two sequential reactions in the de novo biosynthetic pathway for UDP-N-acetylglucosamine (UDP-GlcNAc). The C-terminal domain catalyzes the transfer of acetyl group from acetyl coenzyme A to glucosamine-1-phosphate (GlcN-1-P) to produce N-acetylglucosamine-1-phosphate (GlcNAc-1-P), which is converted into UDP-GlcNAc by the transfer of uridine 5-monophosphate (from uridine 5-triphosphate), a reaction catalyzed by the N-terminal domain. This is Bifunctional protein GlmU from Burkholderia orbicola (strain MC0-3).